A 432-amino-acid chain; its full sequence is Pachytene checkpoint protein 2 homolog (432 aa).

Position 179–186 (glycine 179–threonine 186) interacts with ATP.

It belongs to the AAA ATPase family. PCH2 subfamily.

Functionally, plays a key role in chromosome recombination and chromosome structure development during meiosis. Required at early steps in meiotic recombination that leads to non-crossovers pathways. Also needed for efficient completion of homologous synapsis by influencing crossover distribution along the chromosomes affecting both crossovers and non-crossovers pathways. The sequence is that of Pachytene checkpoint protein 2 homolog (trip13) from Xenopus tropicalis (Western clawed frog).